The chain runs to 89 residues: UPF0367 protein PCC8801_1959 (89 aa).

It belongs to the UPF0367 family.

This chain is UPF0367 protein PCC8801_1959, found in Rippkaea orientalis (strain PCC 8801 / RF-1) (Cyanothece sp. (strain PCC 8801)).